A 125-amino-acid polypeptide reads, in one-letter code: Histone H2A (125 aa).

A compositionally biased stretch (basic residues) spans 1 to 18 (MSGRGKGGKAKAKAKSRS). Residues 1–21 (MSGRGKGGKAKAKAKSRSSRA) form a disordered region. Ser-2 carries the post-translational modification N-acetylserine. Position 104 is an N5-methylglutamine (Gln-104).

It belongs to the histone H2A family. In terms of assembly, the nucleosome is a histone octamer containing two molecules each of H2A, H2B, H3 and H4 assembled in one H3-H4 heterotetramer and two H2A-H2B heterodimers. The octamer wraps approximately 147 bp of DNA.

The protein resides in the nucleus. Its subcellular location is the chromosome. Its function is as follows. Core component of nucleosome. Nucleosomes wrap and compact DNA into chromatin, limiting DNA accessibility to the cellular machineries which require DNA as a template. Histones thereby play a central role in transcription regulation, DNA repair, DNA replication and chromosomal stability. DNA accessibility is regulated via a complex set of post-translational modifications of histones, also called histone code, and nucleosome remodeling. The chain is Histone H2A from Mytilus trossulus (Blue mussel).